The sequence spans 226 residues: UPF0758 protein gbs1168 (226 aa).

Positions 103 to 225 (QILSSEQLAR…YYSFREEADI (123 aa)) constitute an MPN domain. Zn(2+) contacts are provided by H174, H176, and D187. The JAMM motif motif lies at 174-187 (HNHPSGSPNPSESD).

Belongs to the UPF0758 family.

The sequence is that of UPF0758 protein gbs1168 from Streptococcus agalactiae serotype III (strain NEM316).